The primary structure comprises 246 residues: Probable maleylacetoacetate isomerase 1 (246 aa).

Residues Thr32 to Ala116 enclose the GST N-terminal domain. Residues Ser42–Arg47, Val88, Asp100–Ser101, Gln140, and Asn144–Ser146 each bind glutathione. Residues Asp121–Pro241 form the GST C-terminal domain.

It belongs to the GST superfamily. Zeta family. Glutathione serves as cofactor.

It localises to the cytoplasm. The enzyme catalyses 4-maleylacetoacetate = 4-fumarylacetoacetate. It catalyses the reaction RX + glutathione = an S-substituted glutathione + a halide anion + H(+). The protein operates within amino-acid degradation; L-phenylalanine degradation; acetoacetate and fumarate from L-phenylalanine: step 5/6. In terms of biological role, catalyzes the glutathione dependent oxygenation of dichloroacetic acid to glyoxylic acid in vitro. Possesses low glutathione thioltransferase activity toward 4-hydroxynonenal (4-HNE). Has no glutathione thioltransferase activity with adrenochrome, phenethyl isothiocyanate (PEITC), 5-hydroperoxyeicosatetraenoic acid ((5S)-HpETE), prostaglandin A2 (PGA2) or 2-hydroxyethyldisulfide (HED). This Drosophila melanogaster (Fruit fly) protein is Probable maleylacetoacetate isomerase 1 (GstZ1).